Reading from the N-terminus, the 159-residue chain is Endoribonuclease YbeY (159 aa).

The Zn(2+) site is built by His-125, His-129, and His-135.

The protein belongs to the endoribonuclease YbeY family. The cofactor is Zn(2+).

The protein resides in the cytoplasm. Single strand-specific metallo-endoribonuclease involved in late-stage 70S ribosome quality control and in maturation of the 3' terminus of the 16S rRNA. The sequence is that of Endoribonuclease YbeY from Thermoanaerobacter pseudethanolicus (strain ATCC 33223 / 39E) (Clostridium thermohydrosulfuricum).